A 247-amino-acid chain; its full sequence is Phosphatidylserine decarboxylase proenzyme (247 aa).

Catalysis depends on Ser-206, which acts as the Schiff-base intermediate with substrate; via pyruvic acid. Ser-206 bears the Pyruvic acid (Ser); by autocatalysis mark.

The protein belongs to the phosphatidylserine decarboxylase family. PSD-A subfamily. In terms of assembly, heterodimer of a large membrane-associated beta subunit and a small pyruvoyl-containing alpha subunit. Pyruvate is required as a cofactor. Is synthesized initially as an inactive proenzyme. Formation of the active enzyme involves a self-maturation process in which the active site pyruvoyl group is generated from an internal serine residue via an autocatalytic post-translational modification. Two non-identical subunits are generated from the proenzyme in this reaction, and the pyruvate is formed at the N-terminus of the alpha chain, which is derived from the carboxyl end of the proenzyme. The post-translation cleavage follows an unusual pathway, termed non-hydrolytic serinolysis, in which the side chain hydroxyl group of the serine supplies its oxygen atom to form the C-terminus of the beta chain, while the remainder of the serine residue undergoes an oxidative deamination to produce ammonia and the pyruvoyl prosthetic group on the alpha chain.

Its subcellular location is the cell membrane. The catalysed reaction is a 1,2-diacyl-sn-glycero-3-phospho-L-serine + H(+) = a 1,2-diacyl-sn-glycero-3-phosphoethanolamine + CO2. Its pathway is phospholipid metabolism; phosphatidylethanolamine biosynthesis; phosphatidylethanolamine from CDP-diacylglycerol: step 2/2. In terms of biological role, catalyzes the formation of phosphatidylethanolamine (PtdEtn) from phosphatidylserine (PtdSer). The polypeptide is Phosphatidylserine decarboxylase proenzyme (Nitrobacter winogradskyi (strain ATCC 25391 / DSM 10237 / CIP 104748 / NCIMB 11846 / Nb-255)).